A 151-amino-acid polypeptide reads, in one-letter code: Small ribosomal subunit protein uS15 (151 aa).

Positions 1–20 (MARLHSGKRGSSGSTRPLRT) are disordered.

It belongs to the universal ribosomal protein uS15 family. As to quaternary structure, part of the 30S ribosomal subunit.

The polypeptide is Small ribosomal subunit protein uS15 (Methanococcus maripaludis (strain C7 / ATCC BAA-1331)).